The sequence spans 432 residues: Malate dehydrogenase [NADP], chloroplastic (432 aa).

The N-terminal 40 residues, 1 to 40 (MGLSTVYSPAGPRLVPAPLGRCRSAQPRRPRRAPLATVRC), are a transit peptide targeting the chloroplast. Residues 18 to 37 (PLGRCRSAQPRRPRRAPLAT) are disordered. Cysteine 67 and cysteine 72 are oxidised to a cystine. 96-102 (GAAGMIS) contributes to the NADP(+) binding site. Substrate-binding residues include arginine 177 and arginine 183. Position 190 (asparagine 190) interacts with NADP(+). Glutamine 197 contacts NAD(+). 214 to 216 (VGN) contributes to the NADP(+) binding site. Residues asparagine 216 and arginine 247 each contribute to the substrate site. The Proton acceptor role is filled by histidine 272. The cysteines at positions 408 and 420 are disulfide-linked.

This sequence belongs to the LDH/MDH superfamily. MDH type 2 family. As to quaternary structure, homodimer.

The protein resides in the plastid. Its subcellular location is the chloroplast. It carries out the reaction (S)-malate + NADP(+) = oxaloacetate + NADPH + H(+). With respect to regulation, chloroplast NADP-MDH is activated upon illumination. In order to be enzymatically active, disulfide bridges on the protein must be reduced by thioredoxin which receives electrons from ferredoxin and the electron transport system of photosynthesis. The chloroplastic, NADP-dependent form is essential for the photosynthesis C4 cycle, which allows plants to circumvent the problem of photorespiration. In C4 plants, NADP-MDH activity acts to convert oxaloacetate to malate in chloroplasts of mesophyll cells for transport to the bundle sheath cells. In Zea mays (Maize), this protein is Malate dehydrogenase [NADP], chloroplastic.